Consider the following 260-residue polypeptide: Pro-thyrotropin-releasing hormone (260 aa).

The first 24 residues, 1–24 (MPSIQLPVLLLCLTLSGVCLNGRQ), serve as a signal peptide directing secretion. Residues 72–112 (PQWLSKRQHPGKRYISDPEKRQHPGKRDVEEKASFGDIQKR) form a disordered region. Residue Gln79 is modified to Pyrrolidone carboxylic acid. Proline amide is present on Pro81. A compositionally biased stretch (basic and acidic residues) spans 85–112 (YISDPEKRQHPGKRDVEEKASFGDIQKR). Residue Gln93 is modified to Pyrrolidone carboxylic acid. Position 95 is a proline amide (Pro95). Residue Gln113 is modified to Pyrrolidone carboxylic acid. Leu115 is subject to Leucine amide. Residue Gln134 is modified to Pyrrolidone carboxylic acid. The residue at position 136 (Pro136) is a Proline amide. Residue Gln163 is modified to Pyrrolidone carboxylic acid. Pro165 carries the post-translational modification Proline amide. The segment covering 195 to 207 (KHQQFGNRDRDSD) has biased composition (basic and acidic residues). Disordered stretches follow at residues 195–217 (KHQQ…PCDL) and 238–260 (KEGV…ETEE). Residue Gln246 is modified to Pyrrolidone carboxylic acid. A Proline amide modification is found at Pro248.

This sequence belongs to the TRH family.

The protein resides in the secreted. Functionally, functions as a regulator of the biosynthesis of TSH in the anterior pituitary gland and as a neurotransmitter/ neuromodulator in the central and peripheral nervous systems. This is Pro-thyrotropin-releasing hormone (TRH) from Gallus gallus (Chicken).